A 320-amino-acid chain; its full sequence is Cytochrome f (320 aa).

Positions 1–35 (MQNRNTFLGVKEQITRSIFVSIMIYVITRASISNA) are cleaved as a signal peptide. Positions 36, 56, 59, and 60 each coordinate heme. Residues 286-306 (IQGLLFFLASVILAQIFLVLK) traverse the membrane as a helical segment.

It belongs to the cytochrome f family. The 4 large subunits of the cytochrome b6-f complex are cytochrome b6, subunit IV (17 kDa polypeptide, petD), cytochrome f and the Rieske protein, while the 4 small subunits are PetG, PetL, PetM and PetN. The complex functions as a dimer. Heme serves as cofactor.

The protein localises to the plastid. The protein resides in the chloroplast thylakoid membrane. In terms of biological role, component of the cytochrome b6-f complex, which mediates electron transfer between photosystem II (PSII) and photosystem I (PSI), cyclic electron flow around PSI, and state transitions. The protein is Cytochrome f of Dioscorea elephantipes (Elephant's foot yam).